The sequence spans 92 residues: Enhancer of yellow 2 transcription factor (92 aa).

This sequence belongs to the ENY2 family. As to quaternary structure, component of the nuclear pore complex (NPC)-associated TREX-2 complex (transcription and export complex 2). Component of the SAGA transcription coactivator-HAT complex. Within the SAGA complex, participates in a subcomplex of SAGA called the DUB module (deubiquitination module).

Its subcellular location is the nucleus. The protein localises to the nucleoplasm. In terms of biological role, involved in mRNA export coupled transcription activation by association with both the TREX-2 and the SAGA complexes. The transcription regulatory histone acetylation (HAT) complex SAGA is a multiprotein complex that activates transcription by remodeling chromatin and mediating histone acetylation and deubiquitination. Within the SAGA complex, participates in a subcomplex that specifically deubiquitinates histones. The SAGA complex is recruited to specific gene promoters by activators, where it is required for transcription. The TREX-2 complex functions in docking export-competent ribonucleoprotein particles (mRNPs) to the nuclear entrance of the nuclear pore complex (nuclear basket). TREX-2 participates in mRNA export and accurate chromatin positioning in the nucleus by tethering genes to the nuclear periphery. This chain is Enhancer of yellow 2 transcription factor, found in Aedes aegypti (Yellowfever mosquito).